We begin with the raw amino-acid sequence, 261 residues long: Small ribosomal subunit protein uS2 (261 aa).

The segment at 223–261 (EGKQGQDDSEDVEKEMADKAAAEDDEEESIEVVVEKSED) is disordered.

This sequence belongs to the universal ribosomal protein uS2 family.

The polypeptide is Small ribosomal subunit protein uS2 (Lactobacillus johnsonii (strain CNCM I-12250 / La1 / NCC 533)).